The chain runs to 156 residues: Transcription antitermination protein NusB (156 aa).

This sequence belongs to the NusB family.

Involved in transcription antitermination. Required for transcription of ribosomal RNA (rRNA) genes. Binds specifically to the boxA antiterminator sequence of the ribosomal RNA (rrn) operons. The sequence is that of Transcription antitermination protein NusB from Rickettsia akari (strain Hartford).